The sequence spans 206 residues: Ribosome maturation factor RimP (206 aa).

The interval 164–206 is disordered; sequence GGIPEGRAVPSDAVDLTDDSGVDSVEDDEAELEDVENEEGFDK. A compositionally biased stretch (acidic residues) spans 178 to 206; it reads DLTDDSGVDSVEDDEAELEDVENEEGFDK.

It belongs to the RimP family.

The protein resides in the cytoplasm. In terms of biological role, required for maturation of 30S ribosomal subunits. This is Ribosome maturation factor RimP from Rhodococcus erythropolis (strain PR4 / NBRC 100887).